A 51-amino-acid polypeptide reads, in one-letter code: uncharacterized protein (51 aa).

This is an uncharacterized protein from Dictyostelium discoideum (Social amoeba).